We begin with the raw amino-acid sequence, 707 residues long: Ribosomal RNA large subunit methyltransferase K/L (707 aa).

Residues 44-155 enclose the THUMP domain; it reads VIYNLCLWSR…NDILTVSFDL (112 aa).

The protein belongs to the methyltransferase superfamily. RlmKL family.

It localises to the cytoplasm. It carries out the reaction guanosine(2445) in 23S rRNA + S-adenosyl-L-methionine = N(2)-methylguanosine(2445) in 23S rRNA + S-adenosyl-L-homocysteine + H(+). The enzyme catalyses guanosine(2069) in 23S rRNA + S-adenosyl-L-methionine = N(2)-methylguanosine(2069) in 23S rRNA + S-adenosyl-L-homocysteine + H(+). Its function is as follows. Specifically methylates the guanine in position 2445 (m2G2445) and the guanine in position 2069 (m7G2069) of 23S rRNA. The polypeptide is Ribosomal RNA large subunit methyltransferase K/L (Legionella pneumophila (strain Paris)).